Consider the following 46-residue polypeptide: Large ribosomal subunit protein bL36 (46 aa).

Belongs to the bacterial ribosomal protein bL36 family.

The polypeptide is Large ribosomal subunit protein bL36 (Serratia proteamaculans (strain 568)).